A 341-amino-acid chain; its full sequence is Mitochondrial ubiquitin ligase activator of nfkb 1-A (341 aa).

The Cytoplasmic segment spans residues 1-5 (MEDFP). Residues 6–26 (VLEMVCLGSSVALSGLFYYIY) form a helical membrane-spanning segment. Residues 27–233 (RKKRKTVDKL…LLMEQEGQAE (207 aa)) lie on the Mitochondrial intermembrane side of the membrane. The helical transmembrane segment at 234–254 (VWRVFACICALAGVAVLIWTG) threads the bilayer. Residues 255 to 341 (RRYYRQLKLR…IKRVVPLYQA (87 aa)) are Cytoplasmic-facing. An RING-type zinc finger spans residues 292–329 (CVICLSNPRGCVLLDCGHVCCCFRCYQALPQPFCPICR).

Homooligomer.

The protein resides in the mitochondrion outer membrane. The enzyme catalyses S-ubiquitinyl-[E2 ubiquitin-conjugating enzyme]-L-cysteine + [acceptor protein]-L-lysine = [E2 ubiquitin-conjugating enzyme]-L-cysteine + N(6)-ubiquitinyl-[acceptor protein]-L-lysine.. It participates in protein modification; protein ubiquitination. Its function is as follows. E3 ubiquitin-protein ligase that plays a role in the control of mitochondrial morphology. Promotes mitochondrial fragmentation and influences mitochondrial localization. Inhibits cell growth. E3 ubiquitin ligases accept ubiquitin from an E2 ubiquitin-conjugating enzyme in the form of a thioester and then directly transfer the ubiquitin to targeted substrates. The polypeptide is Mitochondrial ubiquitin ligase activator of nfkb 1-A (mul1a) (Danio rerio (Zebrafish)).